Here is a 290-residue protein sequence, read N- to C-terminus: Pyridoxal kinase PdxY (290 aa).

Substrate is bound by residues S12 and T47–Q48. Residues D114, E151, K184, and R211–L214 contribute to the ATP site. Residue D225 participates in substrate binding.

The protein belongs to the pyridoxine kinase family. PdxY subfamily. Homodimer. Mg(2+) serves as cofactor.

The catalysed reaction is pyridoxal + ATP = pyridoxal 5'-phosphate + ADP + H(+). Its pathway is cofactor metabolism; pyridoxal 5'-phosphate salvage; pyridoxal 5'-phosphate from pyridoxal: step 1/1. Functionally, pyridoxal kinase involved in the salvage pathway of pyridoxal 5'-phosphate (PLP). Catalyzes the phosphorylation of pyridoxal to PLP. The polypeptide is Pyridoxal kinase PdxY (Pseudomonas putida (strain ATCC 700007 / DSM 6899 / JCM 31910 / BCRC 17059 / LMG 24140 / F1)).